A 129-amino-acid chain; its full sequence is Small ribosomal subunit protein uS11 (129 aa).

Belongs to the universal ribosomal protein uS11 family. Part of the 30S ribosomal subunit. Interacts with proteins S7 and S18. Binds to IF-3.

Functionally, located on the platform of the 30S subunit, it bridges several disparate RNA helices of the 16S rRNA. Forms part of the Shine-Dalgarno cleft in the 70S ribosome. The protein is Small ribosomal subunit protein uS11 of Azobacteroides pseudotrichonymphae genomovar. CFP2.